The primary structure comprises 615 residues: Sterol 3-beta-glucosyltransferase UGT80B1 (615 aa).

Residues 1 to 54 (MASNVFDHPLQELEGEDNGVKSEKASLLETSGSVDTTPEDSGHRSSDGHRGLDH) form a disordered region. Residues 40-54 (DSGHRSSDGHRGLDH) are compositionally biased toward basic and acidic residues.

The protein belongs to the glycosyltransferase 28 family. Expressed in developing seeds, seedlings, leaves and around the apical tip of cotyledons. In embryo, expressed in the seed coat and cotyledons.

The catalysed reaction is a sterol + UDP-alpha-D-glucose = a sterol 3-beta-D-glucoside + UDP + H(+). Involved in the biosynthesis of sterol glucosides. Catalyzes the synthesis of steryl glycosides (SGs) and acyl steryl glycosides (ASGs) which are the most abundant sterol derivatives in higher plants. Can act on several sterols like sitosterol, campesterol and stigmasterol. Is required for embryonic development, seed suberin accumulation, cutin formation and flavanoid accumulation in the seed coat. Both UGT80A2 and UGT80B1 are required for the normal production of SGs and ASGs in seeds. The chain is Sterol 3-beta-glucosyltransferase UGT80B1 from Arabidopsis thaliana (Mouse-ear cress).